The sequence spans 66 residues: U-scoloptoxin(24)-Er2a (66 aa).

A signal peptide spans 1 to 23 (MVKPLHCLIGIVLFLAVLNAGNG). A disordered region spans residues 43–66 (SLFHGNQRKKRSEEKRFSDMEQTK). A compositionally biased stretch (basic and acidic residues) spans 53–66 (RSEEKRFSDMEQTK).

The protein belongs to the scoloptoxin-24 family. Expressed by the venom gland.

Its subcellular location is the secreted. The chain is U-scoloptoxin(24)-Er2a from Ethmostigmus rubripes (Giant centipede).